The following is a 141-amino-acid chain: Hemoglobin subunit alpha (141 aa).

Residues 1–141 (VLSPADKTNV…VSTVLTSKYR (141 aa)) form the Globin domain. Ser-3 carries the post-translational modification Phosphoserine. Lys-7 carries the N6-succinyllysine modification. Thr-8 carries the post-translational modification Phosphothreonine. Residue Lys-11 is modified to N6-succinyllysine. The residue at position 16 (Lys-16) is an N6-acetyllysine; alternate. Lys-16 carries the N6-succinyllysine; alternate modification. Tyr-24 is modified (phosphotyrosine). Ser-35 bears the Phosphoserine mark. Residue Lys-40 is modified to N6-succinyllysine. The residue at position 49 (Ser-49) is a Phosphoserine. His-58 provides a ligand contact to O2. Residue His-87 coordinates heme b. Ser-102 bears the Phosphoserine mark. Position 108 is a phosphothreonine (Thr-108). Phosphoserine occurs at positions 124 and 131. Phosphothreonine is present on residues Thr-134 and Thr-137. The residue at position 138 (Ser-138) is a Phosphoserine.

This sequence belongs to the globin family. In terms of assembly, heterotetramer of two alpha chains and two beta chains. As to expression, red blood cells.

Its function is as follows. Involved in oxygen transport from the lung to the various peripheral tissues. Hemopressin acts as an antagonist peptide of the cannabinoid receptor CNR1. Hemopressin-binding efficiently blocks cannabinoid receptor CNR1 and subsequent signaling. The protein is Hemoglobin subunit alpha (HBA) of Gorilla gorilla gorilla (Western lowland gorilla).